The sequence spans 84 residues: MAITKKCFAAFVLILLFVMPFVYCSELDNTSGFEIKQEDKCYGPEPCKNGYEGCLFFCVRIAYYLYGECTMKPDHQKHCCCVTK.

Residues 1 to 24 (MAITKKCFAAFVLILLFVMPFVYC) form the signal peptide. Cystine bridges form between C41/C81, C47/C69, C54/C79, and C58/C80.

Belongs to the DEFL family.

It is found in the secreted. The protein is Putative defensin-like protein 114 of Arabidopsis thaliana (Mouse-ear cress).